We begin with the raw amino-acid sequence, 411 residues long: Tyrosine--tRNA ligase (411 aa).

Tyr34 provides a ligand contact to L-tyrosine. A 'HIGH' region motif is present at residues 39–48 (CTATSLHIGS). Tyr171 and Gln175 together coordinate L-tyrosine. Positions 231-235 (KMGKT) match the 'KMSKS' region motif. Lys234 lines the ATP pocket. One can recognise an S4 RNA-binding domain in the interval 345 to 411 (ITAFELFHEA…GKKRHILVKI (67 aa)).

This sequence belongs to the class-I aminoacyl-tRNA synthetase family. TyrS type 1 subfamily. As to quaternary structure, homodimer.

Its subcellular location is the cytoplasm. The catalysed reaction is tRNA(Tyr) + L-tyrosine + ATP = L-tyrosyl-tRNA(Tyr) + AMP + diphosphate + H(+). Its function is as follows. Catalyzes the attachment of tyrosine to tRNA(Tyr) in a two-step reaction: tyrosine is first activated by ATP to form Tyr-AMP and then transferred to the acceptor end of tRNA(Tyr). In Rickettsia bellii (strain RML369-C), this protein is Tyrosine--tRNA ligase.